Consider the following 443-residue polypeptide: Thymidine phosphorylase (443 aa).

Belongs to the thymidine/pyrimidine-nucleoside phosphorylase family. In terms of assembly, homodimer.

The catalysed reaction is thymidine + phosphate = 2-deoxy-alpha-D-ribose 1-phosphate + thymine. It participates in pyrimidine metabolism; dTMP biosynthesis via salvage pathway; dTMP from thymine: step 1/2. Its function is as follows. The enzymes which catalyze the reversible phosphorolysis of pyrimidine nucleosides are involved in the degradation of these compounds and in their utilization as carbon and energy sources, or in the rescue of pyrimidine bases for nucleotide synthesis. The protein is Thymidine phosphorylase of Shewanella sp. (strain MR-7).